A 469-amino-acid chain; its full sequence is Protein RUFY3 (469 aa).

2 positions are modified to phosphothreonine: T5 and T12. Phosphoserine occurs at positions 27, 34, and 49. At T51 the chain carries Phosphothreonine. A Phosphoserine modification is found at D53. Positions 95–227 constitute an RUN domain; sequence DSDYAPLQQF…IDANFCMKGE (133 aa). 2 coiled-coil regions span residues 271 to 362 and 422 to 463; these read NRHL…VEKE and KSEL…AANK. The span at 321–337 shows a compositional bias: basic and acidic residues; it reads SYLLESNRKGPKQDRTA. A disordered region spans residues 321-342; that stretch reads SYLLESNRKGPKQDRTAEGQAL.

Interacts with PAK1. Interacts (via C-terminus) with Ras-related Rab-5 proteins. Interacts (via C-terminus) with Ras-related Rap-2 proteins. Interacts with PIK3CA and PIK3R1. Interacts (via N-terminus) with FSCN1; this interaction induces neuron axon development. Interacts with DBN1. Interacts (via the second coiled coil) with GTP-, but not GDP-bound ARL8A and ARL8B. Interacts with dynactin/DCTN1 and the dynein intermediate chain DYNC1I1/2. Directly interacts with DYNC1LI1. Post-translationally, phosphorylated by PAK1. Isoform 1 is partially phosphorylated. In terms of tissue distribution, expressed in brain (at protein level).

It localises to the cytoplasm. The protein resides in the endomembrane system. It is found in the cell projection. The protein localises to the invadopodium. Its subcellular location is the growth cone. It localises to the perikaryon. The protein resides in the filopodium. It is found in the lamellipodium. The protein localises to the lysosome. ARL8 effector that promotes the coupling of endolysosomes to dynein-dynactin for retrograde transport along microtubules. Acts by binding both GTP-bound ARL8 and dynein-dynactin. In nonneuronal cells, promotes concentration of endolysosomes in the juxtanuclear area. In hippocampal neurons, drives retrograde transport of endolysosomes from the axon to the soma. Plays a role in the generation of neuronal polarity formation and axon growth. Implicated in the formation of a single axon by developing neurons. May inhibit the formation of additional axons by inhibition of PI3K in minor neuronal processes. Plays a role in the formation of F-actin-enriched protrusive structures at the cell periphery. Plays a role in cytoskeletal organization by regulating the subcellular localization of FSCN1 and DBN1 at axonal growth cones. The polypeptide is Protein RUFY3 (Mus musculus (Mouse)).